We begin with the raw amino-acid sequence, 411 residues long: 2,3-bisphosphoglycerate-independent phosphoglycerate mutase (411 aa).

It belongs to the BPG-independent phosphoglycerate mutase family. A-PGAM subfamily.

It carries out the reaction (2R)-2-phosphoglycerate = (2R)-3-phosphoglycerate. It participates in carbohydrate degradation; glycolysis; pyruvate from D-glyceraldehyde 3-phosphate: step 3/5. Catalyzes the interconversion of 2-phosphoglycerate and 3-phosphoglycerate. In Pyrobaculum neutrophilum (strain DSM 2338 / JCM 9278 / NBRC 100436 / V24Sta) (Thermoproteus neutrophilus), this protein is 2,3-bisphosphoglycerate-independent phosphoglycerate mutase.